Reading from the N-terminus, the 170-residue chain is Co-chaperone protein HscB homolog (170 aa).

A J domain is found at 5–79 (DHFSLFGLPA…RARYLCEQAG (75 aa)).

The protein belongs to the HscB family. Interacts with HscA and stimulates its ATPase activity.

Co-chaperone involved in the maturation of iron-sulfur cluster-containing proteins. Seems to help targeting proteins to be folded toward HscA. This chain is Co-chaperone protein HscB homolog, found in Bordetella petrii (strain ATCC BAA-461 / DSM 12804 / CCUG 43448).